Reading from the N-terminus, the 293-residue chain is Protease HtpX (293 aa).

2 helical membrane-spanning segments follow: residues 4-24 and 34-54; these read IALFLLTNLAVMLVFGLVLSL and GLMIMAGLFGFGGAFVSLLMS. Histidine 139 is a binding site for Zn(2+). Glutamate 140 is a catalytic residue. Histidine 143 provides a ligand contact to Zn(2+). 2 consecutive transmembrane segments (helical) span residues 158 to 178 and 193 to 213; these read VVNTFVIFISRLIAQIAAGFL and MVYFAVSMVLELVFGILASII. Residue glutamate 222 participates in Zn(2+) binding.

This sequence belongs to the peptidase M48B family. It depends on Zn(2+) as a cofactor.

Its subcellular location is the cell inner membrane. The protein is Protease HtpX of Yersinia pseudotuberculosis serotype O:1b (strain IP 31758).